Reading from the N-terminus, the 270-residue chain is Bifunctional folate synthesis protein (270 aa).

A DHNA region spans residues 1–119; the sequence is MDQLQIKDLE…TCSVTIHRRK (119 aa). Substrate contacts are provided by residues Glu-21, Tyr-53, and 72 to 73; that span reads IE. Lys-99 serves as the catalytic Proton donor/acceptor; for DHNA activity. Residues 120–270 form an HPPK region; the sequence is QRAFIALGSN…IRNLYDALKK (151 aa). Residues 160-163, 171-173, 192-195, 200-215, 227-233, and 238-240 each bind ATP; these read TEPW, FAN, LAIE, RVRE…DLDL, DLILPHP, and RLF. The Mg(2+) site is built by Asp-212 and Asp-214.

It in the N-terminal section; belongs to the DHNA family. In the C-terminal section; belongs to the HPPK family. In terms of assembly, homotrimer or homotetramer.

The enzyme catalyses 7,8-dihydroneopterin = 6-hydroxymethyl-7,8-dihydropterin + glycolaldehyde. It carries out the reaction 6-hydroxymethyl-7,8-dihydropterin + ATP = (7,8-dihydropterin-6-yl)methyl diphosphate + AMP + H(+). It functions in the pathway cofactor biosynthesis; tetrahydrofolate biosynthesis; 2-amino-4-hydroxy-6-hydroxymethyl-7,8-dihydropteridine diphosphate from 7,8-dihydroneopterin triphosphate: step 3/4. The protein operates within cofactor biosynthesis; tetrahydrofolate biosynthesis; 2-amino-4-hydroxy-6-hydroxymethyl-7,8-dihydropteridine diphosphate from 7,8-dihydroneopterin triphosphate: step 4/4. Its function is as follows. Catalyzes two sequential steps of tetrahydrofolate biosynthesis, the conversion of 7,8-dihydroneopterin to 6-hydroxymethyl-7,8-dihydropterin diphosphate. The polypeptide is Bifunctional folate synthesis protein (Streptococcus pneumoniae serotype 4 (strain ATCC BAA-334 / TIGR4)).